The primary structure comprises 451 residues: Kynureninase (451 aa).

Pyridoxal 5'-phosphate is bound by residues leucine 131, serine 132, 159–162 (FPSD), serine 215, aspartate 244, histidine 247, and tyrosine 269. At lysine 270 the chain carries N6-(pyridoxal phosphate)lysine. Positions 303 and 331 each coordinate pyridoxal 5'-phosphate.

This sequence belongs to the kynureninase family. As to quaternary structure, homodimer. Pyridoxal 5'-phosphate is required as a cofactor.

The protein resides in the cytoplasm. It catalyses the reaction L-kynurenine + H2O = anthranilate + L-alanine + H(+). The catalysed reaction is 3-hydroxy-L-kynurenine + H2O = 3-hydroxyanthranilate + L-alanine + H(+). It participates in amino-acid degradation; L-kynurenine degradation; L-alanine and anthranilate from L-kynurenine: step 1/1. It functions in the pathway cofactor biosynthesis; NAD(+) biosynthesis; quinolinate from L-kynurenine: step 2/3. Its function is as follows. Catalyzes the cleavage of L-kynurenine (L-Kyn) and L-3-hydroxykynurenine (L-3OHKyn) into anthranilic acid (AA) and 3-hydroxyanthranilic acid (3-OHAA), respectively. The chain is Kynureninase from Dictyostelium discoideum (Social amoeba).